We begin with the raw amino-acid sequence, 463 residues long: tRNA modification GTPase MnmE (463 aa).

Residues arginine 30, glutamate 92, and arginine 132 each coordinate (6S)-5-formyl-5,6,7,8-tetrahydrofolate. The TrmE-type G domain maps to 227–386 (GLRVALVGRP…LVQAVLERCG (160 aa)). Asparagine 237 contacts K(+). Residues 237 to 242 (NVGKSS), 256 to 262 (TDLPGTT), 281 to 284 (DTAG), and 342 to 345 (NKAD) each bind GTP. Serine 241 provides a ligand contact to Mg(2+). Residues threonine 256, leucine 258, and threonine 261 each coordinate K(+). A Mg(2+)-binding site is contributed by threonine 262. A (6S)-5-formyl-5,6,7,8-tetrahydrofolate-binding site is contributed by lysine 463.

It belongs to the TRAFAC class TrmE-Era-EngA-EngB-Septin-like GTPase superfamily. TrmE GTPase family. In terms of assembly, homodimer. Heterotetramer of two MnmE and two MnmG subunits. The cofactor is K(+).

It localises to the cytoplasm. Exhibits a very high intrinsic GTPase hydrolysis rate. Involved in the addition of a carboxymethylaminomethyl (cmnm) group at the wobble position (U34) of certain tRNAs, forming tRNA-cmnm(5)s(2)U34. The protein is tRNA modification GTPase MnmE of Synechococcus sp. (strain CC9311).